The primary structure comprises 232 residues: Ubiquinone biosynthesis O-methyltransferase (232 aa).

Residues arginine 36, glycine 55, aspartate 76, and leucine 120 each contribute to the S-adenosyl-L-methionine site.

It belongs to the methyltransferase superfamily. UbiG/COQ3 family.

The catalysed reaction is a 3-demethylubiquinol + S-adenosyl-L-methionine = a ubiquinol + S-adenosyl-L-homocysteine + H(+). It carries out the reaction a 3-(all-trans-polyprenyl)benzene-1,2-diol + S-adenosyl-L-methionine = a 2-methoxy-6-(all-trans-polyprenyl)phenol + S-adenosyl-L-homocysteine + H(+). It functions in the pathway cofactor biosynthesis; ubiquinone biosynthesis. Functionally, O-methyltransferase that catalyzes the 2 O-methylation steps in the ubiquinone biosynthetic pathway. In Pseudomonas entomophila (strain L48), this protein is Ubiquinone biosynthesis O-methyltransferase.